Here is a 142-residue protein sequence, read N- to C-terminus: MHEVRVLAFQKIYSIDINQSAMDDIFDIFSIEDKGLDIENESIKSFYSSLVNGTFNNLEYIDSLIKDISWNWSLDRMDKVDLAILRMGVYSLKFQNFENSKRALIDEAILIAKKYGSKNSDKFINGILDALLKNMENCIEKK.

Belongs to the NusB family.

Involved in transcription antitermination. Required for transcription of ribosomal RNA (rRNA) genes. Binds specifically to the boxA antiterminator sequence of the ribosomal RNA (rrn) operons. This Borrelia garinii subsp. bavariensis (strain ATCC BAA-2496 / DSM 23469 / PBi) (Borreliella bavariensis) protein is Transcription antitermination protein NusB.